The sequence spans 147 residues: Hemoglobin subunit epsilon (147 aa).

Residues 3 to 147 (HFTAEEKAAI…VAIALGHKYH (145 aa)) enclose the Globin domain. 2 positions are modified to phosphoserine: serine 14 and serine 51. Positions 64 and 93 each coordinate heme b.

It belongs to the globin family. In terms of assembly, heterotetramer of two alpha chains and two epsilon chains in early embryonic hemoglobin Gower-2; two zeta chains and two epsilon chains in early embryonic hemoglobin Gower-1. As to expression, red blood cells.

Its function is as follows. The epsilon chain is a beta-type chain of early mammalian embryonic hemoglobin. The chain is Hemoglobin subunit epsilon (HBE1) from Saimiri boliviensis boliviensis (Bolivian squirrel monkey).